The sequence spans 605 residues: Elongation factor 4 (605 aa).

Residues 9-192 (HHIRNFCIIA…AIVKRVPAPS (184 aa)) form the tr-type G domain. GTP is bound by residues 21 to 26 (DHGKST) and 139 to 142 (NKID).

It belongs to the TRAFAC class translation factor GTPase superfamily. Classic translation factor GTPase family. LepA subfamily.

The protein localises to the cell inner membrane. The catalysed reaction is GTP + H2O = GDP + phosphate + H(+). In terms of biological role, required for accurate and efficient protein synthesis under certain stress conditions. May act as a fidelity factor of the translation reaction, by catalyzing a one-codon backward translocation of tRNAs on improperly translocated ribosomes. Back-translocation proceeds from a post-translocation (POST) complex to a pre-translocation (PRE) complex, thus giving elongation factor G a second chance to translocate the tRNAs correctly. Binds to ribosomes in a GTP-dependent manner. This chain is Elongation factor 4, found in Chlorobium phaeobacteroides (strain DSM 266 / SMG 266 / 2430).